The sequence spans 177 residues: ATP synthase subunit b (177 aa).

Residues 19–39 (LFPNLPNFIAHVIATIVLVVI) form a helical membrane-spanning segment.

This sequence belongs to the ATPase B chain family. In terms of assembly, F-type ATPases have 2 components, F(1) - the catalytic core - and F(0) - the membrane proton channel. F(1) has five subunits: alpha(3), beta(3), gamma(1), delta(1), epsilon(1). F(0) has three main subunits: a(1), b(2) and c(10-14). The alpha and beta chains form an alternating ring which encloses part of the gamma chain. F(1) is attached to F(0) by a central stalk formed by the gamma and epsilon chains, while a peripheral stalk is formed by the delta and b chains.

The protein resides in the cell membrane. Its function is as follows. F(1)F(0) ATP synthase produces ATP from ADP in the presence of a proton or sodium gradient. F-type ATPases consist of two structural domains, F(1) containing the extramembraneous catalytic core and F(0) containing the membrane proton channel, linked together by a central stalk and a peripheral stalk. During catalysis, ATP synthesis in the catalytic domain of F(1) is coupled via a rotary mechanism of the central stalk subunits to proton translocation. Component of the F(0) channel, it forms part of the peripheral stalk, linking F(1) to F(0). The sequence is that of ATP synthase subunit b from Mesoplasma florum (strain ATCC 33453 / NBRC 100688 / NCTC 11704 / L1) (Acholeplasma florum).